Reading from the N-terminus, the 896-residue chain is Lipoxygenase 2, chloroplastic (896 aa).

The transit peptide at 1 to 56 directs the protein to the chloroplast; that stretch reads MYCRESLSSLQTLNVAKSLSSLFPKQSALINPISAGRRNNLPRPNLRRRCKVTASR. The 121-residue stretch at 79 to 199 folds into the PLAT domain; that stretch reads ITAQEEFLEG…VDPTKRIFFS (121 aa). Positions 175 to 232 are EIF4E2 binding; the sequence is GSITFTCESWVAPKSVDPTKRIFFSDKSYLPSQTPEPLKKYRKEELETLQGKNREEVG. Positions 202–896 constitute a Lipoxygenase domain; it reads SYLPSQTPEP…GMGVPYSISI (695 aa). His-554, His-559, His-746, Asn-750, and Ile-896 together coordinate Fe cation.

It belongs to the lipoxygenase family. Interacts with EIF4E2. It depends on Fe cation as a cofactor. In terms of tissue distribution, in leaves and inflorescences but not abundant in seeds, roots and stems.

Its subcellular location is the plastid. It is found in the chloroplast. The protein localises to the cytoplasm. It carries out the reaction (9Z,12Z)-octadecadienoate + O2 = (13S)-hydroperoxy-(9Z,11E)-octadecadienoate. It catalyses the reaction (9Z,12Z,15Z)-octadecatrienoate + O2 = (13S)-hydroperoxy-(9Z,11E,15Z)-octadecatrienoate. The protein operates within lipid metabolism; oxylipin biosynthesis. In terms of biological role, 13S-lipoxygenase that can use linolenic acid as substrates. Plant lipoxygenases may be involved in a number of diverse aspects of plant physiology including growth and development, pest resistance, and senescence or responses to wounding. Catalyzes the hydroperoxidation of lipids containing a cis,cis-1,4-pentadiene structure. Required for the wound-induced synthesis of jasmonic acid (JA) in leaves. This is Lipoxygenase 2, chloroplastic (LOX2) from Arabidopsis thaliana (Mouse-ear cress).